Here is a 279-residue protein sequence, read N- to C-terminus: 1D-myo-inositol 2-acetamido-2-deoxy-alpha-D-glucopyranoside deacetylase (279 aa).

Zn(2+) contacts are provided by H12, D15, and H146.

Belongs to the MshB deacetylase family. It depends on Zn(2+) as a cofactor.

The enzyme catalyses 1D-myo-inositol 2-acetamido-2-deoxy-alpha-D-glucopyranoside + H2O = 1D-myo-inositol 2-amino-2-deoxy-alpha-D-glucopyranoside + acetate. Functionally, catalyzes the deacetylation of 1D-myo-inositol 2-acetamido-2-deoxy-alpha-D-glucopyranoside (GlcNAc-Ins) in the mycothiol biosynthesis pathway. The protein is 1D-myo-inositol 2-acetamido-2-deoxy-alpha-D-glucopyranoside deacetylase of Mycobacteroides abscessus (strain ATCC 19977 / DSM 44196 / CCUG 20993 / CIP 104536 / JCM 13569 / NCTC 13031 / TMC 1543 / L948) (Mycobacterium abscessus).